The following is a 243-amino-acid chain: Ubiquinone/menaquinone biosynthesis C-methyltransferase UbiE (243 aa).

Residues Thr-69, Asp-90, and Asp-116 to Ala-117 contribute to the S-adenosyl-L-methionine site.

This sequence belongs to the class I-like SAM-binding methyltransferase superfamily. MenG/UbiE family.

The enzyme catalyses a 2-demethylmenaquinol + S-adenosyl-L-methionine = a menaquinol + S-adenosyl-L-homocysteine + H(+). It carries out the reaction a 2-methoxy-6-(all-trans-polyprenyl)benzene-1,4-diol + S-adenosyl-L-methionine = a 5-methoxy-2-methyl-3-(all-trans-polyprenyl)benzene-1,4-diol + S-adenosyl-L-homocysteine + H(+). Its pathway is quinol/quinone metabolism; menaquinone biosynthesis; menaquinol from 1,4-dihydroxy-2-naphthoate: step 2/2. It functions in the pathway cofactor biosynthesis; ubiquinone biosynthesis. Its function is as follows. Methyltransferase required for the conversion of demethylmenaquinol (DMKH2) to menaquinol (MKH2) and the conversion of 2-polyprenyl-6-methoxy-1,4-benzoquinol (DDMQH2) to 2-polyprenyl-3-methyl-6-methoxy-1,4-benzoquinol (DMQH2). This Burkholderia mallei (strain NCTC 10247) protein is Ubiquinone/menaquinone biosynthesis C-methyltransferase UbiE.